Here is a 125-residue protein sequence, read N- to C-terminus: Large ribosomal subunit protein bL12 (125 aa).

The protein belongs to the bacterial ribosomal protein bL12 family. In terms of assembly, homodimer. Part of the ribosomal stalk of the 50S ribosomal subunit. Forms a multimeric L10(L12)X complex, where L10 forms an elongated spine to which 2 to 4 L12 dimers bind in a sequential fashion. Binds GTP-bound translation factors.

Functionally, forms part of the ribosomal stalk which helps the ribosome interact with GTP-bound translation factors. Is thus essential for accurate translation. The chain is Large ribosomal subunit protein bL12 from Azoarcus sp. (strain BH72).